A 195-amino-acid polypeptide reads, in one-letter code: HTH-type transcriptional regulator BetI (195 aa).

Residues 8-68 enclose the HTH tetR-type domain; the sequence is SIRRRQLIDA…ATMRDITSQL (61 aa). Residues 31–50 constitute a DNA-binding region (H-T-H motif); sequence TIAQIARRAGVSTGIISHYF.

The protein operates within amine and polyamine biosynthesis; betaine biosynthesis via choline pathway [regulation]. In terms of biological role, repressor involved in the biosynthesis of the osmoprotectant glycine betaine. It represses transcription of the choline transporter BetT and the genes of BetAB involved in the synthesis of glycine betaine. This chain is HTH-type transcriptional regulator BetI, found in Escherichia coli O157:H7.